The primary structure comprises 316 residues: Methionyl-tRNA formyltransferase (316 aa).

117-120 is a (6S)-5,6,7,8-tetrahydrofolate binding site; sequence SLLP.

Belongs to the Fmt family.

The enzyme catalyses L-methionyl-tRNA(fMet) + (6R)-10-formyltetrahydrofolate = N-formyl-L-methionyl-tRNA(fMet) + (6S)-5,6,7,8-tetrahydrofolate + H(+). Functionally, attaches a formyl group to the free amino group of methionyl-tRNA(fMet). The formyl group appears to play a dual role in the initiator identity of N-formylmethionyl-tRNA by promoting its recognition by IF2 and preventing the misappropriation of this tRNA by the elongation apparatus. This chain is Methionyl-tRNA formyltransferase, found in Janthinobacterium sp. (strain Marseille) (Minibacterium massiliensis).